Consider the following 259-residue polypeptide: Thiazole synthase (259 aa).

Catalysis depends on K95, which acts as the Schiff-base intermediate with DXP. Residues G156, 182–183, and 204–205 contribute to the 1-deoxy-D-xylulose 5-phosphate site; these read AG and AS.

The protein belongs to the ThiG family. As to quaternary structure, homotetramer. Forms heterodimers with either ThiH or ThiS.

The protein localises to the cytoplasm. It catalyses the reaction [ThiS sulfur-carrier protein]-C-terminal-Gly-aminoethanethioate + 2-iminoacetate + 1-deoxy-D-xylulose 5-phosphate = [ThiS sulfur-carrier protein]-C-terminal Gly-Gly + 2-[(2R,5Z)-2-carboxy-4-methylthiazol-5(2H)-ylidene]ethyl phosphate + 2 H2O + H(+). It functions in the pathway cofactor biosynthesis; thiamine diphosphate biosynthesis. Functionally, catalyzes the rearrangement of 1-deoxy-D-xylulose 5-phosphate (DXP) to produce the thiazole phosphate moiety of thiamine. Sulfur is provided by the thiocarboxylate moiety of the carrier protein ThiS. In vitro, sulfur can be provided by H(2)S. The protein is Thiazole synthase of Corynebacterium aurimucosum (strain ATCC 700975 / DSM 44827 / CIP 107346 / CN-1) (Corynebacterium nigricans).